The primary structure comprises 273 residues: Dermonecrotic toxin LarSicTox-alphaIB1aii (273 aa).

His-5 is an active-site residue. Residues Glu-25 and Asp-27 each coordinate Mg(2+). The Nucleophile role is filled by His-41. 2 disulfide bridges follow: Cys-45–Cys-51 and Cys-47–Cys-190. A Mg(2+)-binding site is contributed by Asp-85. Asn-250 is a glycosylation site (N-linked (GlcNAc...) asparagine).

The protein belongs to the arthropod phospholipase D family. Class II subfamily. Mg(2+) serves as cofactor. As to expression, expressed by the venom gland.

It localises to the secreted. It catalyses the reaction an N-(acyl)-sphingosylphosphocholine = an N-(acyl)-sphingosyl-1,3-cyclic phosphate + choline. It carries out the reaction an N-(acyl)-sphingosylphosphoethanolamine = an N-(acyl)-sphingosyl-1,3-cyclic phosphate + ethanolamine. The catalysed reaction is a 1-acyl-sn-glycero-3-phosphocholine = a 1-acyl-sn-glycero-2,3-cyclic phosphate + choline. The enzyme catalyses a 1-acyl-sn-glycero-3-phosphoethanolamine = a 1-acyl-sn-glycero-2,3-cyclic phosphate + ethanolamine. Its function is as follows. Dermonecrotic toxins cleave the phosphodiester linkage between the phosphate and headgroup of certain phospholipids (sphingolipid and lysolipid substrates), forming an alcohol (often choline) and a cyclic phosphate. This toxin acts on sphingomyelin (SM). It may also act on ceramide phosphoethanolamine (CPE), lysophosphatidylcholine (LPC) and lysophosphatidylethanolamine (LPE), but not on lysophosphatidylserine (LPS), and lysophosphatidylglycerol (LPG). It acts by transphosphatidylation, releasing exclusively cyclic phosphate products as second products. Induces dermonecrosis, hemolysis, increased vascular permeability, edema, inflammatory response, and platelet aggregation. The polypeptide is Dermonecrotic toxin LarSicTox-alphaIB1aii (Loxosceles arizonica (Arizona brown spider)).